Reading from the N-terminus, the 374-residue chain is Formylglycine-generating enzyme (374 aa).

An N-terminal signal peptide occupies residues M1 to G33. A disulfide bond links C50 and C52. Residues R57–G102 are disordered. A Ca(2+)-binding site is contributed by E130. N-linked (GlcNAc...) asparagine glycosylation occurs at N141. 2 disulfides stabilise this stretch: C218–C365 and C235–C346. Positions 259, 260, 273, 275, 293, 296, 298, and 300 each coordinate Ca(2+). Residues C336 and C341 each contribute to the Cu(2+) site. Positions C341 to N360 are interaction with sulfatases.

This sequence belongs to the sulfatase-modifying factor family. As to quaternary structure, monomer, homodimer and heterodimer with SUMF2. The cofactor is Cu(2+). N-glycosylated. Contains high-mannose-type oligosaccharides.

It is found in the endoplasmic reticulum lumen. The enzyme catalyses L-cysteinyl-[sulfatase] + 2 a thiol + O2 = an organic disulfide + 3-oxo-L-alanyl-[sulfatase] + hydrogen sulfide + H2O + H(+). It functions in the pathway protein modification; sulfatase oxidation. Its function is as follows. Oxidase that catalyzes the conversion of cysteine to 3-oxoalanine on target proteins, using molecular oxygen and an unidentified reducing agent. 3-oxoalanine modification, which is also named formylglycine (fGly), occurs in the maturation of arylsulfatases and some alkaline phosphatases that use the hydrated form of 3-oxoalanine as a catalytic nucleophile. Known substrates include GALNS, ARSA, STS and ARSE. The chain is Formylglycine-generating enzyme from Bos taurus (Bovine).